Consider the following 432-residue polypeptide: Adenylosuccinate synthetase (432 aa).

GTP contacts are provided by residues 13 to 19 and 41 to 43; these read GDEGKGK and GHT. The active-site Proton acceptor is the Asp14. The Mg(2+) site is built by Asp14 and Gly41. Residues 14 to 17, 39 to 42, Thr130, Arg144, Gln225, Thr240, and Arg304 contribute to the IMP site; these read DEGK and NAGH. His42 serves as the catalytic Proton donor. 300 to 306 contacts substrate; sequence AVTGRPR. GTP contacts are provided by residues Arg306, 332–334, and 415–417; these read KLD and STG.

It belongs to the adenylosuccinate synthetase family. In terms of assembly, homodimer. Mg(2+) serves as cofactor.

The protein localises to the cytoplasm. The enzyme catalyses IMP + L-aspartate + GTP = N(6)-(1,2-dicarboxyethyl)-AMP + GDP + phosphate + 2 H(+). It functions in the pathway purine metabolism; AMP biosynthesis via de novo pathway; AMP from IMP: step 1/2. Its function is as follows. Plays an important role in the de novo pathway of purine nucleotide biosynthesis. Catalyzes the first committed step in the biosynthesis of AMP from IMP. The protein is Adenylosuccinate synthetase of Histophilus somni (strain 129Pt) (Haemophilus somnus).